We begin with the raw amino-acid sequence, 523 residues long: 2-isopropylmalate synthase (523 aa).

A Pyruvate carboxyltransferase domain is found at 5-267 (VIIFDTTLRD…ETGINAKEIH (263 aa)). Positions 14, 202, 204, and 238 each coordinate Mn(2+). Residues 392–523 (QLKQLVVHSD…QQKARSLGGV (132 aa)) are regulatory domain.

It belongs to the alpha-IPM synthase/homocitrate synthase family. LeuA type 1 subfamily. Homodimer. Requires Mn(2+) as cofactor.

It is found in the cytoplasm. It carries out the reaction 3-methyl-2-oxobutanoate + acetyl-CoA + H2O = (2S)-2-isopropylmalate + CoA + H(+). It participates in amino-acid biosynthesis; L-leucine biosynthesis; L-leucine from 3-methyl-2-oxobutanoate: step 1/4. Functionally, catalyzes the condensation of the acetyl group of acetyl-CoA with 3-methyl-2-oxobutanoate (2-ketoisovalerate) to form 3-carboxy-3-hydroxy-4-methylpentanoate (2-isopropylmalate). The protein is 2-isopropylmalate synthase of Shewanella woodyi (strain ATCC 51908 / MS32).